A 399-amino-acid chain; its full sequence is Probable dual-specificity RNA methyltransferase RlmN (399 aa).

Glu97 functions as the Proton acceptor in the catalytic mechanism. The Radical SAM core domain maps to 103 to 381; that stretch reads YPDRATVCVS…CTVRVERGVS (279 aa). Cys110 and Cys386 are joined by a disulfide. Positions 117, 121, and 124 each coordinate [4Fe-4S] cluster. S-adenosyl-L-methionine contacts are provided by residues 203–204, Ser235, 258–260, and Asn343; these read GE and SLH. The active-site S-methylcysteine intermediate is the Cys386.

This sequence belongs to the radical SAM superfamily. RlmN family. Requires [4Fe-4S] cluster as cofactor.

Its subcellular location is the cytoplasm. It carries out the reaction adenosine(2503) in 23S rRNA + 2 reduced [2Fe-2S]-[ferredoxin] + 2 S-adenosyl-L-methionine = 2-methyladenosine(2503) in 23S rRNA + 5'-deoxyadenosine + L-methionine + 2 oxidized [2Fe-2S]-[ferredoxin] + S-adenosyl-L-homocysteine. The enzyme catalyses adenosine(37) in tRNA + 2 reduced [2Fe-2S]-[ferredoxin] + 2 S-adenosyl-L-methionine = 2-methyladenosine(37) in tRNA + 5'-deoxyadenosine + L-methionine + 2 oxidized [2Fe-2S]-[ferredoxin] + S-adenosyl-L-homocysteine. Functionally, specifically methylates position 2 of adenine 2503 in 23S rRNA and position 2 of adenine 37 in tRNAs. This Roseiflexus sp. (strain RS-1) protein is Probable dual-specificity RNA methyltransferase RlmN.